The primary structure comprises 367 residues: tRNA/tmRNA (uracil-C(5))-methyltransferase (367 aa).

Gln190, Tyr218, Asn223, Glu239, and Asp299 together coordinate S-adenosyl-L-methionine. Cys324 functions as the Nucleophile in the catalytic mechanism. Glu358 (proton acceptor) is an active-site residue.

It belongs to the class I-like SAM-binding methyltransferase superfamily. RNA M5U methyltransferase family. TrmA subfamily.

The enzyme catalyses uridine(54) in tRNA + S-adenosyl-L-methionine = 5-methyluridine(54) in tRNA + S-adenosyl-L-homocysteine + H(+). The catalysed reaction is uridine(341) in tmRNA + S-adenosyl-L-methionine = 5-methyluridine(341) in tmRNA + S-adenosyl-L-homocysteine + H(+). Dual-specificity methyltransferase that catalyzes the formation of 5-methyluridine at position 54 (m5U54) in all tRNAs, and that of position 341 (m5U341) in tmRNA (transfer-mRNA). This chain is tRNA/tmRNA (uracil-C(5))-methyltransferase, found in Yersinia enterocolitica serotype O:8 / biotype 1B (strain NCTC 13174 / 8081).